The following is a 435-amino-acid chain: ATP-dependent protease ATPase subunit HslU (435 aa).

Residues Ile-18, 60–65 (GVGKTE), Asp-248, Glu-313, and Arg-385 contribute to the ATP site.

Belongs to the ClpX chaperone family. HslU subfamily. In terms of assembly, a double ring-shaped homohexamer of HslV is capped on each side by a ring-shaped HslU homohexamer. The assembly of the HslU/HslV complex is dependent on binding of ATP.

It localises to the cytoplasm. Its function is as follows. ATPase subunit of a proteasome-like degradation complex; this subunit has chaperone activity. The binding of ATP and its subsequent hydrolysis by HslU are essential for unfolding of protein substrates subsequently hydrolyzed by HslV. HslU recognizes the N-terminal part of its protein substrates and unfolds these before they are guided to HslV for hydrolysis. The protein is ATP-dependent protease ATPase subunit HslU of Sinorhizobium medicae (strain WSM419) (Ensifer medicae).